Consider the following 214-residue polypeptide: Predicted GPI-anchored protein 57 (214 aa).

The signal sequence occupies residues 1–18; sequence MLFTQLIILFTFISQIIC. The interval 36 to 101 is disordered; the sequence is RGSSGHSSGG…SSGSSSGSRN (66 aa). Over residues 42 to 60 the composition is skewed to gly residues; that stretch reads SSGGGHSSSGSHSSGGGHS. A compositionally biased stretch (low complexity) spans 76–85; the sequence is SGSSSGSSSG. The N-linked (GlcNAc...) asparagine glycan is linked to Asn-182. The GPI-anchor amidated glycine moiety is linked to residue Gly-191. Residues 192-214 constitute a propeptide, removed in mature form; that stretch reads VSLNIPSTHFYVIGLAAAYSIVL.

Belongs to the PGA37 family.

Its subcellular location is the secreted. The protein resides in the cell membrane. Its function is as follows. Predicted GPI-anchored protein which may have a role during host infection. This is Predicted GPI-anchored protein 57 (PGA57) from Candida albicans (strain SC5314 / ATCC MYA-2876) (Yeast).